Reading from the N-terminus, the 411-residue chain is Basic leucine zipper 10 (411 aa).

Disordered stretches follow at residues 1–36 (MNSI…DEVS), 76–99 (SLPS…DSGN), 140–251 (SVKP…NDLK), and 362–411 (NNFA…KCVD). The segment covering 24–36 (PDSSKPVTADEVS) has biased composition (polar residues). Positions 89–98 (DSRFRDRDSG) are enriched in basic and acidic residues. Polar residues-rich tracts occupy residues 146-173 (STSS…TSSL) and 183-193 (SMKQVTSGSSR). Ser-196 carries the phosphoserine modification. Positions 196–206 (SDDEDLDEENE) are enriched in acidic residues. Residues 215–278 (DVKKSRRMLS…DEAAVGNRIL (64 aa)) enclose the bZIP domain. Residues 217 to 236 (KKSRRMLSNRESARRSRRRK) are basic motif. Residues 219 to 226 (SRRMLSNR) carry the Nuclear localization signal motif. The tract at residues 243–257 (LETQVNDLKGEHSSL) is leucine-zipper. Residues 368-390 (PSQTSSPLQRIRNGQNHHVTPSA) are compositionally biased toward polar residues.

The protein belongs to the bZIP family. Forms a heterodimer with BZIP1, BZIP2, BZIP9, BZIP11, BZIP44, BZIP53 and BZIP63. Interacts with ABI3 and forms a complex made of ABI3, BZIP53 and BZIP10. Binding with LSD1 leads to cytoplasmic retention. In terms of tissue distribution, expressed in roots, shoots, stems, young leaves, trichomes, hydathodes, siliques, seeds, and flowers, mostly in vascular tissues.

The protein localises to the nucleus. It localises to the cytoplasm. Its function is as follows. Transcription factor that binds to the C-box-like motif (5'-TGCTGACGTCA-3') and G-box-like motif (5'-CCACGTGGCC-3'), ABRE elements, of gene promoters. Binds to the 5'-ACGT-3' motif of seed storage protein (SSP) encoding gene promoters (e.g. At2S and CRU3) and promotes their expression in seeds when in complex with ABI3 and BZIP53. Involved in the defense responses to the biotrophic pathogen Hyaloperonospora parasitica and oxidative stress responses; mediates positively cell death. Promotes BZIP53-mediated response to hypoosmolarity stress that leads to POX1/PRODH1 accumulation. The chain is Basic leucine zipper 10 (BZIP10) from Arabidopsis thaliana (Mouse-ear cress).